Here is a 211-residue protein sequence, read N- to C-terminus: Large ribosomal subunit protein bL25 (211 aa).

It belongs to the bacterial ribosomal protein bL25 family. CTC subfamily. In terms of assembly, part of the 50S ribosomal subunit; part of the 5S rRNA/L5/L18/L25 subcomplex. Contacts the 5S rRNA. Binds to the 5S rRNA independently of L5 and L18.

Its function is as follows. This is one of the proteins that binds to the 5S RNA in the ribosome where it forms part of the central protuberance. The polypeptide is Large ribosomal subunit protein bL25 (Methylobacterium nodulans (strain LMG 21967 / CNCM I-2342 / ORS 2060)).